Here is a 166-residue protein sequence, read N- to C-terminus: Small ribosomal subunit protein uS5 (166 aa).

The S5 DRBM domain maps to 11-74 (LEDRVVAINR…DAARKNLIEV (64 aa)).

This sequence belongs to the universal ribosomal protein uS5 family. In terms of assembly, part of the 30S ribosomal subunit. Contacts proteins S4 and S8.

Functionally, with S4 and S12 plays an important role in translational accuracy. Its function is as follows. Located at the back of the 30S subunit body where it stabilizes the conformation of the head with respect to the body. The chain is Small ribosomal subunit protein uS5 from Ligilactobacillus salivarius (strain UCC118) (Lactobacillus salivarius).